We begin with the raw amino-acid sequence, 275 residues long: 2,3,4,5-tetrahydropyridine-2,6-dicarboxylate N-succinyltransferase (275 aa).

It belongs to the transferase hexapeptide repeat family.

Its subcellular location is the cytoplasm. It carries out the reaction (S)-2,3,4,5-tetrahydrodipicolinate + succinyl-CoA + H2O = (S)-2-succinylamino-6-oxoheptanedioate + CoA. Its pathway is amino-acid biosynthesis; L-lysine biosynthesis via DAP pathway; LL-2,6-diaminopimelate from (S)-tetrahydrodipicolinate (succinylase route): step 1/3. The polypeptide is 2,3,4,5-tetrahydropyridine-2,6-dicarboxylate N-succinyltransferase (Cupriavidus taiwanensis (strain DSM 17343 / BCRC 17206 / CCUG 44338 / CIP 107171 / LMG 19424 / R1) (Ralstonia taiwanensis (strain LMG 19424))).